A 195-amino-acid chain; its full sequence is Shikimate kinase (195 aa).

Residue 33–38 (GAGKTT) participates in ATP binding. Thr-37 lines the Mg(2+) pocket. Residues Asp-55, Arg-79, and Gly-101 each contribute to the substrate site. Residue Arg-139 coordinates ATP. Residue Arg-158 coordinates substrate. An ATP-binding site is contributed by Arg-175.

It belongs to the shikimate kinase family. Monomer. The cofactor is Mg(2+).

It localises to the cytoplasm. It catalyses the reaction shikimate + ATP = 3-phosphoshikimate + ADP + H(+). It functions in the pathway metabolic intermediate biosynthesis; chorismate biosynthesis; chorismate from D-erythrose 4-phosphate and phosphoenolpyruvate: step 5/7. In terms of biological role, catalyzes the specific phosphorylation of the 3-hydroxyl group of shikimic acid using ATP as a cosubstrate. This is Shikimate kinase from Nitrosospira multiformis (strain ATCC 25196 / NCIMB 11849 / C 71).